The chain runs to 329 residues: Deoxynucleotidyltransferase terminal-interacting protein 1 (329 aa).

Disordered regions lie at residues 1–22 (MGAT…GGLE) and 147–178 (KRGR…ILSS). An important for dimerization region spans residues 56-147 (MTTSFTDPAI…RLTHELPGIK (92 aa)). Basic and acidic residues predominate over residues 147–158 (KRGRQAEEECAH). The a.T hook DNA-binding region spans 159–173 (RGSPLPKKRKGRPPG). S161 carries the phosphoserine modification. Residues 164-170 (PKKRKGR) carry the Nuclear localization signal motif. The interval 197–316 (REGPKWDPAR…MRKYMETLRT (120 aa)) is important for DNA and nucleosome binding. A DNA-binding region (H-T-H motif) is located at residues 216–237 (GSRANKALGMGGTRGRIYIKHP).

In terms of assembly, monomer and homodimer. A minor proportion may form homotrimers. Interacts with ZNF541. Interacts with the terminal deoxynucleotidyltransferase DNTT. Interacts with TRERF1. Identified in a histone deacetylase complex that contains DNTTIP1, HDAC1 and MIDEAS; this complex assembles into a tetramer that contains four copies of each protein chain. Component of a histone deacetylase complex containing DNTTIP1, ZNF541, HDAC1 and HDAC2. Identified in a complex with KCTD19, HDAC1, HDAC2 and ZNF541.

It localises to the nucleus. Increases DNTT terminal deoxynucleotidyltransferase activity (in vitro). Also acts as a transcriptional regulator, binding to the consensus sequence 5'-GNTGCATG-3' following an AT-tract. Associates with RAB20 promoter and positively regulates its transcription. Binds DNA and nucleosomes; may recruit HDAC1 complexes to nucleosomes or naked DNA. This Homo sapiens (Human) protein is Deoxynucleotidyltransferase terminal-interacting protein 1 (DNTTIP1).